The chain runs to 438 residues: sn-glycerol-3-phosphate-binding periplasmic protein UgpB (438 aa).

The first 23 residues, 1–23 (MKPLHYTASALALGLALMGNAQA), serve as a signal peptide directing secretion. Sn-glycerol 3-phosphate-binding residues include tyrosine 65, glutamate 89, serine 144, serine 270, glycine 307, tyrosine 346, and arginine 397.

This sequence belongs to the bacterial solute-binding protein 1 family. The complex is composed of two ATP-binding proteins (UgpC), two transmembrane proteins (UgpA and UgpE) and a solute-binding protein (UgpB).

The protein resides in the periplasm. Functionally, part of the ABC transporter complex UgpBAEC involved in sn-glycerol-3-phosphate (G3P) import. Binds G3P. The protein is sn-glycerol-3-phosphate-binding periplasmic protein UgpB (ugpB) of Escherichia coli O157:H7.